A 389-amino-acid polypeptide reads, in one-letter code: Probable serine/threonine-protein kinase PBL24 (389 aa).

The tract at residues 1–36 is disordered; the sequence is MSCFLGPSTNNKSRENEGSSMAAPYEQQNLPRNDRR. Cys-3 carries S-palmitoyl cysteine lipidation. The Protein kinase domain occupies 71-348; sequence FRQEFLIGEG…SDVVTALSFM (278 aa). ATP-binding positions include 77-85 and Lys-100; that span reads IGEGGFGRV. The Proton acceptor role is filled by Asp-198. Phosphoserine is present on residues Ser-202 and Ser-232. Thr-238 carries the phosphothreonine modification. Tyr-246 bears the Phosphotyrosine mark.

It belongs to the protein kinase superfamily. Ser/Thr protein kinase family.

The protein resides in the cell membrane. The catalysed reaction is L-seryl-[protein] + ATP = O-phospho-L-seryl-[protein] + ADP + H(+). It carries out the reaction L-threonyl-[protein] + ATP = O-phospho-L-threonyl-[protein] + ADP + H(+). Functionally, may be involved in plant defense signaling. The protein is Probable serine/threonine-protein kinase PBL24 of Arabidopsis thaliana (Mouse-ear cress).